The primary structure comprises 87 residues: Small polypeptide ROTUNDIFOLIA LIKE 2 (87 aa).

Residues 19-35 (LIPHTSHYILQLVYLHL) traverse the membrane as a helical segment. The tract at residues 56 to 87 (GQMGRLNRAFREKRARFYIFRRCVIMLLRWSD) is required for DVL/RTFL small polypeptide activity.

The protein belongs to the DVL/RTFL small polypeptides family.

Its subcellular location is the cell membrane. Its function is as follows. Small polypeptide acting as a regulatory molecule which coordinates cellular responses required for differentiation, growth and development, probably by restricting polar cell proliferation in lateral organs. The sequence is that of Small polypeptide ROTUNDIFOLIA LIKE 2 from Oryza sativa subsp. japonica (Rice).